We begin with the raw amino-acid sequence, 122 residues long: uncharacterized protein (122 aa).

This is an uncharacterized protein from Aquifex aeolicus (strain VF5).